The following is a 62-amino-acid chain: Large ribosomal subunit protein bL33 (62 aa).

This sequence belongs to the bacterial ribosomal protein bL33 family.

This chain is Large ribosomal subunit protein bL33, found in Porphyromonas gingivalis (strain ATCC 33277 / DSM 20709 / CIP 103683 / JCM 12257 / NCTC 11834 / 2561).